The following is a 308-amino-acid chain: uncharacterized protein (308 aa).

The ABC transporter domain maps to 5–236 (LELQQLKKTY…LKSETFILDL (232 aa)). 38-45 (GPNGAGKS) contributes to the ATP binding site.

This sequence belongs to the ABC transporter superfamily.

This is an uncharacterized protein from Escherichia coli (strain K12).